Consider the following 410-residue polypeptide: Na(+)/H(+) antiporter NhaA 1/4 (410 aa).

Helical transmembrane passes span 16–36 (VGGS…NSPL), 55–75 (LNLS…FFIV), 95–115 (ALPI…FLAF), 125–145 (GGWG…LAVV), 156–176 (FLLT…AVAC), 178–198 (SGIN…FGYL), 215–235 (AWLL…ACGV), 275–295 (IALP…AGGF), 299–319 (AITW…IFGG), 340–360 (IAGI…IAEL), and 371–391 (AKGA…LLLG).

This sequence belongs to the NhaA Na(+)/H(+) (TC 2.A.33) antiporter family.

Its subcellular location is the cell membrane. It catalyses the reaction Na(+)(in) + 2 H(+)(out) = Na(+)(out) + 2 H(+)(in). Functionally, na(+)/H(+) antiporter that extrudes sodium in exchange for external protons. The sequence is that of Na(+)/H(+) antiporter NhaA 1/4 from Streptomyces coelicolor (strain ATCC BAA-471 / A3(2) / M145).